The following is a 211-amino-acid chain: Transcriptional regulator GfcR (211 aa).

Belongs to the purine/pyrimidine phosphoribosyltransferase family. GfcR subfamily.

The protein is Transcriptional regulator GfcR of Methanocaldococcus jannaschii (strain ATCC 43067 / DSM 2661 / JAL-1 / JCM 10045 / NBRC 100440) (Methanococcus jannaschii).